Consider the following 132-residue polypeptide: uncharacterized protein (132 aa).

This is an uncharacterized protein from Methanocaldococcus jannaschii (strain ATCC 43067 / DSM 2661 / JAL-1 / JCM 10045 / NBRC 100440) (Methanococcus jannaschii).